A 353-amino-acid polypeptide reads, in one-letter code: UPF0283 membrane protein YcjF (353 aa).

Residues 1–69 (MTEPLKPRID…LRPKRSLWRK (69 aa)) lie on the Periplasmic side of the membrane. A helical membrane pass occupies residues 70-90 (MVMGGLALFGASVVGQGVQWT). The Cytoplasmic portion of the chain corresponds to 91–99 (MNAWQTQDW). The chain crosses the membrane as a helical span at residues 100–120 (VALGGCAAGALIIGAGVGSVV). Topologically, residues 121 to 212 (TEWRRLWRLR…ARREISRSAA (92 aa)) are periplasmic. The helical transmembrane segment at 213 to 233 (ESTLMIAVSPLALVDMAFIAW) threads the bilayer. Over 234–353 (RNLRLINRIA…LQKGKTPSEK (120 aa)) the chain is Cytoplasmic.

This sequence belongs to the UPF0283 family.

Its subcellular location is the cell inner membrane. The chain is UPF0283 membrane protein YcjF (ycjF) from Escherichia coli O157:H7.